The primary structure comprises 247 residues: 2,3-bisphosphoglycerate-dependent phosphoglycerate mutase (247 aa).

Residues 8–15 (RHGESVWN), 21–22 (TG), arginine 60, 87–90 (ERHY), lysine 98, 114–115 (RR), and 183–184 (GN) each bind substrate. Residue histidine 9 is the Tele-phosphohistidine intermediate of the active site. Glutamate 87 functions as the Proton donor/acceptor in the catalytic mechanism.

It belongs to the phosphoglycerate mutase family. BPG-dependent PGAM subfamily. As to quaternary structure, homodimer.

The catalysed reaction is (2R)-2-phosphoglycerate = (2R)-3-phosphoglycerate. It functions in the pathway carbohydrate degradation; glycolysis; pyruvate from D-glyceraldehyde 3-phosphate: step 3/5. In terms of biological role, catalyzes the interconversion of 2-phosphoglycerate and 3-phosphoglycerate. This is 2,3-bisphosphoglycerate-dependent phosphoglycerate mutase from Geobacter sulfurreducens (strain ATCC 51573 / DSM 12127 / PCA).